Reading from the N-terminus, the 330-residue chain is RNA/RNP complex-1-interacting phosphatase (330 aa).

Residues 1–12 (MSQWHHPRSGWG) are compositionally biased toward basic residues. Residues 1–32 (MSQWHHPRSGWGRRRDFSGRSSAKKKGGNHIP) form a disordered region. The Tyrosine-protein phosphatase domain maps to 61-208 (FEKKLAPEEC…LQNGPIRKNW (148 aa)). The Phosphocysteine intermediate role is filled by C152. 153 to 158 (THGLNR) contributes to the substrate binding site. R158 acts as the Proton donor/acceptor in catalysis.

The protein belongs to the protein-tyrosine phosphatase family. Non-receptor class dual specificity subfamily. As to quaternary structure, monomer. May interact with SFRS7 and SFRS9/SRP30C.

Its subcellular location is the nucleus. It localises to the nucleus speckle. Functionally, possesses RNA 5'-triphosphatase and diphosphatase activities, but displays a poor protein-tyrosine phosphatase activity. In addition, has phosphatase activity with ATP, ADP and O-methylfluorescein phosphate (in vitro). Binds to RNA. May participate in nuclear mRNA metabolism. In Homo sapiens (Human), this protein is RNA/RNP complex-1-interacting phosphatase.